The chain runs to 158 residues: uncharacterized protein (158 aa).

An N-terminal signal peptide occupies residues methionine 1–alanine 22. A helical transmembrane segment spans residues leucine 120–alanine 140.

It is found in the cell membrane. This is an uncharacterized protein from Bacillus cereus.